Consider the following 341-residue polypeptide: L-threonine 3-dehydrogenase (341 aa).

Cys-38 serves as a coordination point for Zn(2+). Residues Thr-40 and His-43 each act as charge relay system in the active site. Zn(2+) contacts are provided by His-63, Glu-64, Cys-93, Cys-96, Cys-99, and Cys-107. NAD(+) is bound by residues Ile-175, Asp-195, Arg-200, Leu-262–Ile-264, and Ile-286–Tyr-287.

It belongs to the zinc-containing alcohol dehydrogenase family. Homotetramer. The cofactor is Zn(2+).

The protein localises to the cytoplasm. It carries out the reaction L-threonine + NAD(+) = (2S)-2-amino-3-oxobutanoate + NADH + H(+). It participates in amino-acid degradation; L-threonine degradation via oxydo-reductase pathway; glycine from L-threonine: step 1/2. Functionally, catalyzes the NAD(+)-dependent oxidation of L-threonine to 2-amino-3-ketobutyrate. The chain is L-threonine 3-dehydrogenase from Marinomonas sp. (strain MWYL1).